The following is a 532-amino-acid chain: Glucan synthesis regulatory protein (532 aa).

The tract at residues 374-532 is disordered; the sequence is TANKRKSMAP…DAEDMKDIEI (159 aa). Residues 381–393 show a composition bias toward low complexity; that stretch reads MAPSMASASGMRS. Residues 447 to 457 are compositionally biased toward polar residues; it reads PTTSLTASNAS. A compositionally biased stretch (basic and acidic residues) spans 475-516; the sequence is SGEHSKEDIKVNEDSPAKERTSEDKEKKPETEANGKATESKG.

Belongs to the KNR4/SMI1 family.

Its function is as follows. Involved in the regulation of 1,3-beta-glucan synthase activity and cell-wall formation. This Neurospora crassa (strain ATCC 24698 / 74-OR23-1A / CBS 708.71 / DSM 1257 / FGSC 987) protein is Glucan synthesis regulatory protein (cot-2).